The chain runs to 206 residues: Small ribosomal subunit protein uS4 (206 aa).

An S4 RNA-binding domain is found at 96–156 (TRLDNVVYRM…EKSRTQARIK (61 aa)).

Belongs to the universal ribosomal protein uS4 family. Part of the 30S ribosomal subunit. Contacts protein S5. The interaction surface between S4 and S5 is involved in control of translational fidelity.

Its function is as follows. One of the primary rRNA binding proteins, it binds directly to 16S rRNA where it nucleates assembly of the body of the 30S subunit. Functionally, with S5 and S12 plays an important role in translational accuracy. The polypeptide is Small ribosomal subunit protein uS4 (Shewanella amazonensis (strain ATCC BAA-1098 / SB2B)).